Here is a 57-residue protein sequence, read N- to C-terminus: Large ribosomal subunit protein bL32 (57 aa).

The segment covering 1 to 20 (MAVPKKKTSKTKRDQRKANW) has biased composition (basic residues). The segment at 1 to 21 (MAVPKKKTSKTKRDQRKANWK) is disordered.

This sequence belongs to the bacterial ribosomal protein bL32 family.

The sequence is that of Large ribosomal subunit protein bL32 from Rippkaea orientalis (strain PCC 8801 / RF-1) (Cyanothece sp. (strain PCC 8801)).